Consider the following 572-residue polypeptide: Laccase-3 (572 aa).

Positions 1 to 18 are cleaved as a signal peptide; sequence MARTTFLVSVSLFVSAVL. Plastocyanin-like domains lie at 21 to 145 and 157 to 304; these read TVEY…LVIY and IDDE…LIYE. Cu cation is bound by residues H82, H84, H127, and H129. Residues C103 and C561 are joined by a disulfide bond. 5 N-linked (GlcNAc...) asparagine glycosylation sites follow: N182, N228, N294, N367, and N405. The Plastocyanin-like 3 domain maps to 422–540; it reads DMPTLLKILT…EGFAMVFAEA (119 aa). The Cu cation site is built by H470, H473, H475, H522, C523, H524, and H528.

This sequence belongs to the multicopper oxidase family. Homodimer. Requires Cu cation as cofactor. As to expression, in mycelia, at a lower level than LCC4.

It is found in the secreted. It catalyses the reaction 4 hydroquinone + O2 = 4 benzosemiquinone + 2 H2O. Lignin degradation and detoxification of lignin-derived products. This Thanatephorus cucumeris (Black scurf of potato) protein is Laccase-3 (LCC3).